The following is a 691-amino-acid chain: Two-component response regulator ORR21 (691 aa).

Residues 17 to 132 (KVLVVDDDPT…ELKNIWQHVI (116 aa)) enclose the Response regulatory domain. 4-aspartylphosphate is present on aspartate 68. Basic and acidic residues predominate over residues 139-155 (NKEHEHSGSLDDTDRTR). The segment at 139 to 204 (NKEHEHSGSL…DPSSTSKKPR (66 aa)) is disordered. A DNA-binding region (myb-like GARP) is located at residues 199–258 (TSKKPRVVWSVELHQQFVNAVNHLGIDKAVPKKILELMNVPGLTRENVASHLQKFRLYLK).

The protein belongs to the ARR family. Type-B subfamily. Post-translationally, two-component system major event consists of a His-to-Asp phosphorelay between a sensor histidine kinase (HK) and a response regulator (RR). In plants, the His-to-Asp phosphorelay involves an additional intermediate named Histidine-containing phosphotransfer protein (HPt). This multistep phosphorelay consists of a His-Asp-His-Asp sequential transfer of a phosphate group between first a His and an Asp of the HK protein, followed by the transfer to a conserved His of the HPt protein and finally the transfer to an Asp in the receiver domain of the RR protein.

It is found in the nucleus. In terms of biological role, transcriptional activator that binds specific DNA sequence. Functions as a response regulator involved in His-to-Asp phosphorelay signal transduction system. Phosphorylation of the Asp residue in the receiver domain activates the ability of the protein to promote the transcription of target genes. May directly activate some type-A response regulators in response to cytokinins. The polypeptide is Two-component response regulator ORR21 (Oryza sativa subsp. japonica (Rice)).